The primary structure comprises 354 residues: DNA ligase C2 (354 aa).

Lysine 29 functions as the N6-AMP-lysine intermediate in the catalytic mechanism.

The protein belongs to the ATP-dependent DNA ligase family.

The catalysed reaction is ATP + (deoxyribonucleotide)n-3'-hydroxyl + 5'-phospho-(deoxyribonucleotide)m = (deoxyribonucleotide)n+m + AMP + diphosphate.. DNA ligase that seals nicks in double-stranded DNA during DNA replication, DNA recombination and DNA repair. Has weak intrinsic nick joining activities and accumulates DNA-adenylate. Acts as a backup for LigD in the Ku-LigD-dependent NHEJ pathway. The sequence is that of DNA ligase C2 (ligC2) from Mycolicibacterium smegmatis (strain ATCC 700084 / mc(2)155) (Mycobacterium smegmatis).